Reading from the N-terminus, the 256-residue chain is MAEHPDLPPLRIADREFGSRLIMGTGGAENLAVLEEALVASGTELTTVAMRRVDAAGGTGVLDLLKRLEITPLPNTAGCRTAAEAVLTAQLAAEALDTTWVKLEVVADERTLLPDPIELLSAAEQLVDAGFTVLPYTNDDPVLARRLEDAGCAAVMPLGAPIGTGLGIGNPHNIEMIVAAAGVPVILDAGIGTASDAALAMELGCSAVLLATAVTRAKRPPLMAAAMADAVRAGLLAREAGRIPKRFWAQASSPQR.

The active-site Schiff-base intermediate with DXP is lysine 102. Residues glycine 163, 189 to 190, and 211 to 212 each bind 1-deoxy-D-xylulose 5-phosphate; these read AG and AT.

The protein belongs to the ThiG family. As to quaternary structure, homotetramer. Forms heterodimers with either ThiH or ThiS.

Its subcellular location is the cytoplasm. It carries out the reaction [ThiS sulfur-carrier protein]-C-terminal-Gly-aminoethanethioate + 2-iminoacetate + 1-deoxy-D-xylulose 5-phosphate = [ThiS sulfur-carrier protein]-C-terminal Gly-Gly + 2-[(2R,5Z)-2-carboxy-4-methylthiazol-5(2H)-ylidene]ethyl phosphate + 2 H2O + H(+). The protein operates within cofactor biosynthesis; thiamine diphosphate biosynthesis. In terms of biological role, catalyzes the rearrangement of 1-deoxy-D-xylulose 5-phosphate (DXP) to produce the thiazole phosphate moiety of thiamine. Sulfur is provided by the thiocarboxylate moiety of the carrier protein ThiS. In vitro, sulfur can be provided by H(2)S. The chain is Thiazole synthase from Nocardia farcinica (strain IFM 10152).